Consider the following 70-residue polypeptide: Large ribosomal subunit protein bL31 (70 aa).

This sequence belongs to the bacterial ribosomal protein bL31 family. Type A subfamily. Part of the 50S ribosomal subunit.

Its function is as follows. Binds the 23S rRNA. The protein is Large ribosomal subunit protein bL31 of Mycoplasma mobile (strain ATCC 43663 / 163K / NCTC 11711) (Mesomycoplasma mobile).